An 83-amino-acid chain; its full sequence is Molybdopterin synthase sulfur carrier subunit (83 aa).

Position 83 is a 1-thioglycine; alternate (Gly-83). Gly-83 carries the glycyl adenylate; alternate modification.

Belongs to the MoaD family. MOCS2A subfamily. As to quaternary structure, heterotetramer; composed of 2 small (MOCS2A) and 2 large (MOCS2B) subunits. Post-translationally, C-terminal thiocarboxylation occurs in 2 steps, it is first acyl-adenylated (-COAMP) via the hesA/moeB/thiF part of MOCS3, then thiocarboxylated (-COSH) via the rhodanese domain of MOCS3.

It localises to the cytoplasm. It functions in the pathway cofactor biosynthesis; molybdopterin biosynthesis. Functionally, acts as a sulfur carrier required for molybdopterin biosynthesis. Component of the molybdopterin synthase complex that catalyzes the conversion of precursor Z into molybdopterin by mediating the incorporation of 2 sulfur atoms into precursor Z to generate a dithiolene group. In the complex, serves as sulfur donor by being thiocarboxylated (-COSH) at its C-terminus by MOCS3. After interaction with MOCS2B, the sulfur is then transferred to precursor Z to form molybdopterin. In Chlamydomonas reinhardtii (Chlamydomonas smithii), this protein is Molybdopterin synthase sulfur carrier subunit.